The chain runs to 307 residues: MADEKTFRIGFIVLGLFLLSLGTFLMSHDRPQVYGTFYAMGSVMVIGGVIWSMCQCYPKITFVPADSDFQGILSPKALSLLETGLSEVKSPQPPYVRLWEEAAYDQSLPDFTHIQMKVMGYSEDPRPLLAPELKTGASSVREGEPRTAQAWMEAPVVVHRGSDENEGEKSHSQSSPSVGPQGSAPLASFHDDLDVGSSEGSSLQPSPNRDEPHRQVPWASRGPLDRFSDFALIDDTPTSEDTVLDGQAREAALPRKQQWSLRMKGETVQARAEEPEQEEEDLYYGLPDSPGNPLPDKELGFEPDIQG.

At Met-1–Lys-5 the chain is on the cytoplasmic side. The tract at residues Met-1 to Ile-72 is regulates channel membrane trafficking and anion conductance. Residues Thr-6–Met-26 form a helical membrane-spanning segment. At Ser-27–Gln-32 the chain is on the extracellular side. A helical membrane pass occupies residues Val-33–Met-53. 2 S-palmitoyl cysteine lipidation sites follow: Cys-54 and Cys-56. Over Cys-54 to Gly-307 the chain is Cytoplasmic. Ser-79 and Ser-107 each carry phosphoserine. Disordered stretches follow at residues Thr-135–Ala-154 and Gly-161–Leu-224. The segment covering Gly-161 to His-171 has biased composition (basic and acidic residues). A Phosphoserine modification is found at Ser-162. Residues Ser-172–Ser-183 show a composition bias toward low complexity. Polar residues predominate over residues Ser-198 to Pro-207. Residues Ser-228 and Ser-289 each carry the phosphoserine modification. The disordered stretch occupies residues Arg-255–Gly-307.

Interacts with CLCNK channels. Forms probably heteromers with CLCNKA in the thin ascending limb of Henle and with CLCNKB in the thick ascending limb and more distal segments. In terms of processing, palmitoylation is necessary for activation of plasma membrane-inserted CLC-K/barttin channels. As to expression, expression is evident in inner and outer stripes of the outer medulla of the kidney, most probably representing thin limbs of Henle's loop together with some collecting duct coursing through the outer stripe. In situ hybridization in fetal kidney at 18.5 dpc revealed a clear continuity between hybridization signals from the thin limb of Henle's loop and the distal convoluted tubule, suggesting that part of the expression pattern may result from expression in the thick ascending limb of Henle's loop. In addition, strong signals are present in a subset of cortical tubules, representing distal convoluted tubules or cortical collecting duct. Strong expression is also observed in the inner medulla of the kidney. This expression does not extend all the way to the tip of the papilla. Thus this signal most probably represents cells of the thin ascending limbs. In the inner ear, strong and exclusive expression is detected in marginal cells of the stria vascularis. In addition to cochlear signal, expression is observed in dark cells localized at the base of the crista ampullaris of the vestibular organ.

Its subcellular location is the basolateral cell membrane. In terms of biological role, regulatory subunit of anion-selective CLCNKA:BSND and CLCNKB:BSND heteromeric channels involved in basolateral chloride conductance along the nephron to achieve urine concentration and maintain systemic acid-base homeostasis, and in the stria vascularis of the inner ear to establish the endocochlear potential necessary for normal hearing. Most likely acts as a chaperone that allosterically regulates proper sorting of CLCNKA:BSND and CLCNKB:BSND channels at the basolateral plasma membrane domain and functional switch to ion conducting state. Mediates constitutive opening of channel common gates. The polypeptide is Barttin (Mus musculus (Mouse)).